Reading from the N-terminus, the 1984-residue chain is Sodium channel protein type 9 subunit alpha (1984 aa).

Residues 1 to 125 (MAMLPPPGPQ…RRISIKILVH (125 aa)) are Cytoplasmic-facing. The segment covering 26 to 39 (RISEEKAKEHKDEK) has biased composition (basic and acidic residues). Residues 26–55 (RISEEKAKEHKDEKKDDEEEGPKPSSDLEA) are disordered. An I repeat occupies 112–410 (FSPLRRISIK…VAMAYEEQNQ (299 aa)). The helical transmembrane segment at 126 to 145 (SLFSMLIMCTILTNCIFMTL) threads the bilayer. Topologically, residues 146 to 150 (SNPPE) are extracellular. Residues 151–172 (WTKNVEYTFTGIYTFESLIKIL) form a helical membrane-spanning segment. At 173 to 185 (ARGFCVGEFTFLR) the chain is on the cytoplasmic side. The helical transmembrane segment at 186-204 (DPWNWLDFVVIVFAYLTEF) threads the bilayer. Residues 205–210 (VNLGNV) lie on the Extracellular side of the membrane. A glycan (N-linked (GlcNAc...) asparagine) is linked at N209. A helical transmembrane segment spans residues 211-227 (SALRTFRVLRALKTISV). At 228–241 (IPGLKTIVGALIQS) the chain is on the cytoplasmic side. A helical transmembrane segment spans residues 242–267 (VKKLSDVMILTVFCLSVFALIGLQLF). Residues 268–346 (MGNLKHKCFR…PDYGYTSFDT (79 aa)) lie on the Extracellular side of the membrane. C275 and C324 are oxidised to a cystine. An N-linked (GlcNAc...) asparagine glycan is attached at N283. An intramembrane region (pore-forming) is located at residues 347–363 (FSWAFLALFRLMTQDYW). Residues 364-376 (ENLYQQTLRAAGK) are Extracellular-facing. The helical transmembrane segment at 377 to 402 (TYMIFFVVVIFLGSFYLINLILAVVA) threads the bilayer. The Cytoplasmic segment spans residues 403–744 (MAYEEQNQAN…LIYFIVMDPF (342 aa)). Positions 461 to 471 (SSSETSRLSSK) are enriched in low complexity. Disordered regions lie at residues 461–542 (SSSE…RGSL) and 576–609 (IFGDNESRRGSLFVPHRPRERRSSNISQASRSPP). Residues 474–486 (KERRNRRKKKKQK) are compositionally biased toward basic residues. The span at 489–509 (SGEEKGDDEKLSKSGSEESIR) shows a compositional bias: basic and acidic residues. One copy of the II repeat lies at 725–988 (CSPYWIKFKK…EEDTDANNLQ (264 aa)). A helical membrane pass occupies residues 745 to 761 (VDLAITICIVLNTLFMA). The Extracellular portion of the chain corresponds to 762 to 770 (MEHHPMTEE). The chain crosses the membrane as a helical span at residues 771-795 (FKNVLAVGNLIFTGIFAAEMVLKLI). Residues 796 to 804 (AMDPYEYFQ) are Cytoplasmic-facing. The chain crosses the membrane as a helical span at residues 805–821 (VGWNIFDSLIVTLSLIE). The Extracellular segment spans residues 822-830 (LFLADVEGL). A helical transmembrane segment spans residues 831 to 847 (SVLRSFRLLRVFKLAKS). Topologically, residues 848–864 (WPTLNMLIKIIGNSVGA) are cytoplasmic. The chain crosses the membrane as a helical span at residues 865–887 (LGNLTLVLAIIVFIFAVVGMQLF). Topologically, residues 888-914 (GKSYKECVCKINVDCKLPRWHMNDFFH) are extracellular. The cysteines at positions 896 and 902 are disulfide-linked. The segment at residues 915–927 (SFLIVFRVLCGEW) is an intramembrane region (pore-forming). The Extracellular portion of the chain corresponds to 928 to 939 (IETMWDCMEVAG). Residues C934 and C943 are joined by a disulfide bond. Residues 940-966 (QTMCLIVYMMVMVIGNLVVLNLFLALL) traverse the membrane as a helical segment. At 967–1185 (LSSFSSDNLT…WWTIRKTCYR (219 aa)) the chain is on the cytoplasmic side. 2 disordered regions span residues 1015–1040 (KKPKGSKDTKRTADPNNKKENYISNR) and 1103–1145 (EELS…EPVN). A compositionally biased stretch (basic and acidic residues) spans 1019-1035 (GSKDTKRTADPNNKKEN). Residues 1135-1145 (GEEEAEAEPVN) show a composition bias toward acidic residues. Residues 1178 to 1486 (TIRKTCYRIV…KKYYNAMKKL (309 aa)) form an III repeat. The helical transmembrane segment at 1186–1210 (IVEHSWFESFIVLMILLSSGALAFE) threads the bilayer. Over 1211-1222 (DIYIEKKKTIKI) the chain is Extracellular. Residues 1223–1248 (ILEYADKIFTYIFILEMLLKWVAYGY) form a helical membrane-spanning segment. Topologically, residues 1249–1250 (KT) are cytoplasmic. The chain crosses the membrane as a helical span at residues 1251-1276 (YFTNAWCWLDFLIVDVSLVTLVANTL). Residues 1277–1285 (GYSDLGPIK) lie on the Extracellular side of the membrane. The helical transmembrane segment at 1286 to 1302 (SLRTLRALRPLRALSRF) threads the bilayer. At 1303–1315 (EGMRVVVNALIGA) the chain is on the cytoplasmic side. Residues 1316 to 1340 (IPSIMNVLLVCLIFWLIFSIMGVNL) form a helical membrane-spanning segment. Topologically, residues 1341 to 1392 (FAGKFYECVNTTDGSRFPTSQVANRSECFALMNVSGNVRWKNLKVNFDNVGL) are extracellular. A disulfide bridge links C1348 with C1368. Residues N1350, N1364, and N1373 are each glycosylated (N-linked (GlcNAc...) asparagine). Residues 1393–1403 (GYLSLLQVATF) constitute an intramembrane region (pore-forming). Residues 1404-1429 (KGWMDIMYAAVDSVNVNEQPKYEYSL) are Extracellular-facing. The chain crosses the membrane as a helical span at residues 1430–1455 (YMYIYFVIFIIFGSFFTLNLFIGVII). The Cytoplasmic portion of the chain corresponds to 1456–1512 (DNFNQQKKKLGGQDIFMTEEQKKYYNAMKKLGSKKPQKPIPRPGNKFQGCIFDLVTN). S1488 carries the post-translational modification Phosphoserine; by PKC. The IV repeat unit spans residues 1495 to 1793 (IPRPGNKFQG…WEKFDPDATQ (299 aa)). Residues 1513 to 1532 (QAFDITIMVLICLNMVTMMV) traverse the membrane as a helical segment. The Extracellular segment spans residues 1533–1543 (EKEGQTEYMDY). Residues 1544–1565 (VLHWINMVFIILFTGECVLKLI) form a helical membrane-spanning segment. Residues 1566–1574 (SLRHYYFTV) are Cytoplasmic-facing. Residues 1575–1596 (GWNIFDFVVVILSIVGMFLAEM) form a helical membrane-spanning segment. Residues 1597 to 1605 (IEKYFVSPT) are Extracellular-facing. Residues 1606–1625 (LFRVIRLARIGRILRLIKGA) traverse the membrane as a helical segment. Residues 1626–1638 (KGIRTLLFALMMS) lie on the Cytoplasmic side of the membrane. The chain crosses the membrane as a helical span at residues 1639 to 1661 (LPALFNIGLLLFLVMFIYAIFGM). The Extracellular portion of the chain corresponds to 1662 to 1684 (SNFAYVKKEAGINDMFNFETFGN). An intramembrane region (pore-forming) is located at residues 1685–1697 (SMICLFQITTSAG). The Extracellular portion of the chain corresponds to 1698–1731 (WDGLLAPILNSAPPDCDPKKVHPGSSVEGDCGNP). C1713 and C1728 are oxidised to a cystine. The chain crosses the membrane as a helical span at residues 1732-1757 (SVGIFYFVSYIIISFLVVVNMYIAVI). At 1758–1984 (LENFSVATEE…EDKEKDESRK (227 aa)) the chain is on the cytoplasmic side. The IQ domain maps to 1887–1916 (EEVSATIIQRAYRRYRLRQHVKNISSIYIK). The segment covering 1916–1930 (KDGDRDDDLPNKEDT) has biased composition (basic and acidic residues). Residues 1916-1984 (KDGDRDDDLP…EDKEKDESRK (69 aa)) are disordered. A compositionally biased stretch (polar residues) spans 1946–1958 (VTASTISPPSYDS). Over residues 1960 to 1984 (TKPDQEKYETDKTEKEDKEKDESRK) the composition is skewed to basic and acidic residues.

The protein belongs to the sodium channel (TC 1.A.1.10) family. Nav1.7/SCN9A subfamily. The Nav1.7 voltage-gated sodium channel consists of an ion-conducting alpha subunit SCN9A which is functional on its own regulated by one or more beta-1 (SCN1B), beta-2 (SCN2B), beta-3 (SCN3B) and beta-4 (SCN4B) subunits. SCN1B and SCN3B are non-covalently associated with SCN9A. SCN2B and SCN4B are disulfide-linked to SCN9A. SCN1B regulates channel inactivation. Interacts with NEDD4 and NEDD4L; regulates Nav1.7 activity most probably through ubiquitination and subsequent endocytosis. Interacts with TMEM233; modulates the gating properties of NaV1.7. In terms of processing, phosphorylation at Ser-1488 by PKC in a highly conserved cytoplasmic loop increases peak sodium currents. Ubiquitinated by NEDD4L; which may promote its endocytosis. Does not seem to be ubiquitinated by NEDD4. Post-translationally, ubiquitinated by NEDD4L; which may promote its endocytosis. In terms of tissue distribution, expressed at high level in the dorsal root ganglion and at much lower levels in the brain, sciatic nerve, nodose ganglia, heart, thyroid and adrenal glands and Schwann cells, but not in the cardiac and skeletal muscles, brain and liver.

It is found in the cell membrane. Its subcellular location is the cell projection. The protein localises to the neuron projection. It localises to the axon. It carries out the reaction Na(+)(in) = Na(+)(out). Its activity is regulated as follows. Inhibited by the conotoxin GVIIJ. Functionally, pore-forming subunit of Nav1.7, a voltage-gated sodium (Nav) channel that directly mediates the depolarizing phase of action potentials in excitable membranes. Navs, also called VGSCs (voltage-gated sodium channels) or VDSCs (voltage-dependent sodium channels), operate by switching between closed and open conformations depending on the voltage difference across the membrane. In the open conformation they allow Na(+) ions to selectively pass through the pore, along their electrochemical gradient. The influx of Na(+) ions provokes membrane depolarization, initiating the propagation of electrical signals throughout cells and tissues. Nav1.7 plays a crucial role in controlling the excitability and action potential propagation from nociceptor neurons, thereby contributing to the sensory perception of pain. The protein is Sodium channel protein type 9 subunit alpha of Rattus norvegicus (Rat).